Reading from the N-terminus, the 330-residue chain is MKYEIDAKRRTVRVVPEREEDLYFVYLLVERGDVVRGWTVREYKPEGAKEGERVKMYLAVRVESLEYHKFRGSLRIRGPVVEVQEGVEGVKGRRHTFDVVPGREIEIEKAAEFPLDVVEEILKMAQALMPKVLLVSIDDEEAAFAYITALGVELIQVVHNASKGEESLFDGYLESVRKQVDELSRRLKPDKLVVAGPAMLVEHIARYIRGDKAPQGSGGLAGVYEFIRSGLYDELKTQMGVKAYEKLIHMAATSRESVAIGPQEVEEAASLGRVDFVLVLDSYIKESPEKAWVLLSQIYKTKGRIYIVREDTEVGAGIRAMGGIAAVLRW.

The protein belongs to the eukaryotic release factor 1 family. Pelota subfamily. Monomer. A divalent metal cation is required as a cofactor.

It is found in the cytoplasm. Functionally, may function in recognizing stalled ribosomes, interact with stem-loop structures in stalled mRNA molecules, and effect endonucleolytic cleavage of the mRNA. May play a role in the release non-functional ribosomes and degradation of damaged mRNAs. Has endoribonuclease activity. This Pyrobaculum neutrophilum (strain DSM 2338 / JCM 9278 / NBRC 100436 / V24Sta) (Thermoproteus neutrophilus) protein is Protein pelota homolog.